Here is a 119-residue protein sequence, read N- to C-terminus: Small ribosomal subunit protein uS13m (119 aa).

This sequence belongs to the universal ribosomal protein uS13 family. In terms of assembly, part of the small ribosomal subunit.

It is found in the mitochondrion. In terms of biological role, located at the top of the head of the small subunit, it contacts several helices of the small subunit rRNA. The protein is Small ribosomal subunit protein uS13m (RPS13) of Prototheca wickerhamii.